Consider the following 179-residue polypeptide: ATP synthase subunit delta (179 aa).

Belongs to the ATPase delta chain family. F-type ATPases have 2 components, F(1) - the catalytic core - and F(0) - the membrane proton channel. F(1) has five subunits: alpha(3), beta(3), gamma(1), delta(1), epsilon(1). F(0) has three main subunits: a(1), b(2) and c(10-14). The alpha and beta chains form an alternating ring which encloses part of the gamma chain. F(1) is attached to F(0) by a central stalk formed by the gamma and epsilon chains, while a peripheral stalk is formed by the delta and b chains.

It localises to the cell inner membrane. Functionally, f(1)F(0) ATP synthase produces ATP from ADP in the presence of a proton or sodium gradient. F-type ATPases consist of two structural domains, F(1) containing the extramembraneous catalytic core and F(0) containing the membrane proton channel, linked together by a central stalk and a peripheral stalk. During catalysis, ATP synthesis in the catalytic domain of F(1) is coupled via a rotary mechanism of the central stalk subunits to proton translocation. In terms of biological role, this protein is part of the stalk that links CF(0) to CF(1). It either transmits conformational changes from CF(0) to CF(1) or is implicated in proton conduction. The sequence is that of ATP synthase subunit delta from Burkholderia vietnamiensis (strain G4 / LMG 22486) (Burkholderia cepacia (strain R1808)).